We begin with the raw amino-acid sequence, 218 residues long: Thiopurine S-methyltransferase (218 aa).

Residues Trp10, Leu45, Glu66, and Arg123 each coordinate S-adenosyl-L-methionine.

This sequence belongs to the class I-like SAM-binding methyltransferase superfamily. TPMT family.

It localises to the cytoplasm. The catalysed reaction is S-adenosyl-L-methionine + a thiopurine = S-adenosyl-L-homocysteine + a thiopurine S-methylether.. The chain is Thiopurine S-methyltransferase from Shewanella baltica (strain OS155 / ATCC BAA-1091).